The primary structure comprises 373 residues: COP9 signalosome complex subunit 5 (373 aa).

One can recognise an MPN domain in the interval 66–201 (CLISRLATTK…IGAFRTLPSK (136 aa)). 3 residues coordinate Zn(2+): His147, His149, and Asp160. Residues 147–160 (HSHPGYGCWLSNID) carry the JAMM motif motif. The interval 289 to 325 (FTHERSNSISSTSSLTTRHTTDVEMDDQESAQSSLDI) is disordered. A compositionally biased stretch (low complexity) spans 295–306 (NSISSTSSLTTR).

This sequence belongs to the peptidase M67A family. CSN5 subfamily. In terms of assembly, component of the COP9 signalosome (CSN) complex.

It is found in the cytoplasm. It localises to the nucleus. Its function is as follows. Catalytic Component of the COP9 signalosome (CSN) complex that acts as an regulator of the ubiquitin (Ubl) conjugation pathway by mediating the deneddylation of the cullin subunit of SCF-type E3 ubiquitin-protein ligase complexes. The CNS complex is involved in the regulation of the mating pheromone response. This chain is COP9 signalosome complex subunit 5 (RRI1), found in Kluyveromyces lactis (strain ATCC 8585 / CBS 2359 / DSM 70799 / NBRC 1267 / NRRL Y-1140 / WM37) (Yeast).